The primary structure comprises 495 residues: UDP-glycosyltransferase 73C25 (495 aa).

23–26 (GHMI) provides a ligand contact to UDP-alpha-D-glucose. Histidine 24 serves as the catalytic Proton acceptor. The Charge relay role is filled by aspartate 129. Residues 355-358 (WSPQ), 373-381 (HCGWNSTLE), and 397-398 (DQ) each bind UDP-alpha-D-glucose.

Belongs to the UDP-glycosyltransferase family.

Catalyzes the transfer of a glucose (Glc) moiety from UDP-Glc to the C-28 carboxylic group of oleanolate 3-O-beta-D-glucoside to form oleanolate 3,28-O-beta-D-diglucoside. The sequence is that of UDP-glycosyltransferase 73C25 from Barbarea vulgaris (Yellow rocket).